A 282-amino-acid chain; its full sequence is Hepatitis A virus cellular receptor 2 homolog (282 aa).

The first 21 residues, 1–21 (MFSWLPFSCALLLLQPLPARS), serve as a signal peptide directing secretion. Residues 22–131 (LENAYTAEVG…EKLELKLSIT (110 aa)) enclose the Ig-like V-type domain. Residues 22–194 (LENAYTAEVG…KDSGETIRTA (173 aa)) are Extracellular-facing. 3 disulfide bridges follow: Cys38-Cys111, Cys52-Cys63, and Cys58-Cys110. Position 62 (Gln62) interacts with a 1,2-diacyl-sn-glycero-3-phospho-L-serine. N-linked (GlcNAc...) asparagine glycans are attached at residues Asn74 and Asn100. Arg112 lines the a 1,2-diacyl-sn-glycero-3-phospho-L-serine pocket. Ca(2+)-binding residues include Phe115 and Gly117. Position 119 (Met119) interacts with a 1,2-diacyl-sn-glycero-3-phospho-L-serine. Position 120 (Asn120) interacts with Ca(2+). The disordered stretch occupies residues 138 to 163 (PAGTAHGDSTTASPRTLTTEGSGSET). Residues 144–163 (GDSTTASPRTLTTEGSGSET) show a composition bias toward polar residues. Thr147 carries an O-linked (GalNAc...) threonine glycan. N-linked (GlcNAc...) asparagine glycosylation occurs at Asn173. The helical transmembrane segment at 195–215 (VHIGVGVSAGLALALILGVLI) threads the bilayer. Residues 216 to 282 (LKWYSSKKKK…YCYVSSQQPS (67 aa)) lie on the Cytoplasmic side of the membrane. Residues 253–271 (EENIYTIEENIYEMENSNE) form an interaction with BAG6 region. Tyr257 carries the phosphotyrosine; by ITK modification.

This sequence belongs to the immunoglobulin superfamily. TIM family. Interacts with HMGB1; impairs HMGB1 binding to B-DNA and likely HMGB1-mediated innate immune response. Interacts with BAG6. Interacts (phosphorylated) with PIK3R1 and PIK3R2. Interacts (not dependent on its phosphorylation status) with FYN. Interacts (in basal state T-cells) with VAV1; AKT1/2, LCP2, ZAP70, SYK, PIK3R1, FYN, SH3BP2 and SH2D2A. Interacts (in activated T-cells) with LCK and PLCG. Interacts with ILF3; this interaction promotes ILF3 ubiquitination and degradation.

It localises to the membrane. Its subcellular location is the cell junction. In terms of biological role, cell surface receptor implicated in modulating innate and adaptive immune responses. Generally accepted to have an inhibiting function. Reports on stimulating functions suggest that the activity may be influenced by the cellular context and/or the respective ligand. Regulates macrophage activation. Inhibits T-helper type 1 lymphocyte (Th1)-mediated auto- and alloimmune responses and promotes immunological tolerance. In CD8+ cells attenuates TCR-induced signaling, specifically by blocking NF-kappaB and NFAT promoter activities resulting in the loss of IL-2 secretion. The function may implicate its association with LCK proposed to impair phosphorylation of TCR subunits. In contrast, shown to activate TCR-induced signaling in T-cells probably implicating ZAP70, LCP2, LCK and FYN. Expressed on Treg cells can inhibit Th17 cell responses. Receptor for LGALS9. Binding to LGALS9 is believed to result in suppression of T-cell responses; the resulting apoptosis of antigen-specific cells may implicate HAVCR2 phosphorylation and disruption of its association with BAG6. Binding to LGALS9 is proposed to be involved in innate immune response to intracellular pathogens. Expressed on Th1 cells interacts with LGALS9 expressed on Mycobacterium tuberculosis-infected macrophages to stimulate antibactericidal activity including IL-1 beta secretion and to restrict intracellular bacterial growth. However, the function as receptor for LGALS9 has been challenged. Also reported to enhance CD8+ T cell responses to an acute infection such as by Listeria monocytogenes. Receptor for phosphatidylserine (PtSer); PtSer-binding is calcium-dependent. May recognize PtSer on apoptotic cells leading to their phagocytosis. Mediates the engulfment of apoptotic cells by dendritic cells. Expressed on T-cells, promotes conjugation but not engulfment of apoptotic cells. Expressed on dendritic cells (DCs) positively regulates innate immune response and in synergy with Toll-like receptors promotes secretion of TNF-alpha. In tumor-imfiltrating DCs suppresses nucleic acid-mediated innate immune repsonse by interaction with HMGB1 and interfering with nucleic acid-sensing and trafficking of nucleid acids to endosomes. Can enhance mast cell production of Th2 cytokines Il-4, IL-6 and IL-13. Expressed on natural killer (NK) cells acts as a coreceptor to enhance IFN-gamma production in response to LGALS9. In contrast, shown to suppress NK cell-mediated cytotoxicity. Negatively regulates NK cell function in LPS-induced endotoxic shock. This Rattus norvegicus (Rat) protein is Hepatitis A virus cellular receptor 2 homolog (Havcr2).